The following is a 426-amino-acid chain: Glutamate-1-semialdehyde 2,1-aminomutase (426 aa).

K265 is modified (N6-(pyridoxal phosphate)lysine).

It belongs to the class-III pyridoxal-phosphate-dependent aminotransferase family. HemL subfamily. In terms of assembly, homodimer. Pyridoxal 5'-phosphate is required as a cofactor.

The protein resides in the cytoplasm. The catalysed reaction is (S)-4-amino-5-oxopentanoate = 5-aminolevulinate. It functions in the pathway porphyrin-containing compound metabolism; protoporphyrin-IX biosynthesis; 5-aminolevulinate from L-glutamyl-tRNA(Glu): step 2/2. The polypeptide is Glutamate-1-semialdehyde 2,1-aminomutase (Aliarcobacter butzleri (strain RM4018) (Arcobacter butzleri)).